The following is a 371-amino-acid chain: Probable endolytic peptidoglycan transglycosylase RlpA (371 aa).

A signal peptide spans 1–25 (MNQRHLWTIVALSVTVLGTPAVGRT). Positions 177–191 (LVASQSQNKSSSSQQ) are enriched in low complexity. The interval 177 to 196 (LVASQSQNKSSSSQQKSERY) is disordered.

Belongs to the RlpA family.

Functionally, lytic transglycosylase with a strong preference for naked glycan strands that lack stem peptides. This chain is Probable endolytic peptidoglycan transglycosylase RlpA, found in Nostoc sp. (strain PCC 7120 / SAG 25.82 / UTEX 2576).